We begin with the raw amino-acid sequence, 139 residues long: Ribonuclease VapC36 (139 aa).

The region spanning 1 to 127 is the PINc domain; sequence MIVDTSAVVA…GNDFPQTDLE (127 aa). 2 residues coordinate Mg(2+): Asp4 and Asp100.

This sequence belongs to the PINc/VapC protein family. The cofactor is Mg(2+).

Toxic component of a type II toxin-antitoxin (TA) system. An RNase. Its cognate antitoxin is VapB36. The polypeptide is Ribonuclease VapC36 (Mycobacterium tuberculosis (strain ATCC 25618 / H37Rv)).